The chain runs to 612 residues: Threonine--tRNA ligase (612 aa).

The catalytic stretch occupies residues 218-509; that stretch reads DHRKLGVELG…LSEHFGGNFP (292 aa). Cys310, His361, and His486 together coordinate Zn(2+).

This sequence belongs to the class-II aminoacyl-tRNA synthetase family. Homodimer. Zn(2+) serves as cofactor.

Its subcellular location is the cytoplasm. The catalysed reaction is tRNA(Thr) + L-threonine + ATP = L-threonyl-tRNA(Thr) + AMP + diphosphate + H(+). In terms of biological role, catalyzes the attachment of threonine to tRNA(Thr) in a two-step reaction: L-threonine is first activated by ATP to form Thr-AMP and then transferred to the acceptor end of tRNA(Thr). Also edits incorrectly charged L-seryl-tRNA(Thr). The chain is Threonine--tRNA ligase from Helicobacter pylori (strain ATCC 700392 / 26695) (Campylobacter pylori).